The chain runs to 446 residues: 3-phosphoshikimate 1-carboxyvinyltransferase (446 aa).

Positions 21, 22, and 26 each coordinate 3-phosphoshikimate. Lys21 provides a ligand contact to phosphoenolpyruvate. Residues Gly94 and Arg122 each coordinate phosphoenolpyruvate. 3-phosphoshikimate contacts are provided by Ser167, Gln169, Asp315, and Lys342. Gln169 contributes to the phosphoenolpyruvate binding site. Residue Asp315 is the Proton acceptor of the active site. Positions 346 and 388 each coordinate phosphoenolpyruvate.

This sequence belongs to the EPSP synthase family. In terms of assembly, monomer.

Its subcellular location is the cytoplasm. It catalyses the reaction 3-phosphoshikimate + phosphoenolpyruvate = 5-O-(1-carboxyvinyl)-3-phosphoshikimate + phosphate. It participates in metabolic intermediate biosynthesis; chorismate biosynthesis; chorismate from D-erythrose 4-phosphate and phosphoenolpyruvate: step 6/7. Functionally, catalyzes the transfer of the enolpyruvyl moiety of phosphoenolpyruvate (PEP) to the 5-hydroxyl of shikimate-3-phosphate (S3P) to produce enolpyruvyl shikimate-3-phosphate and inorganic phosphate. This chain is 3-phosphoshikimate 1-carboxyvinyltransferase, found in Alkalilimnicola ehrlichii (strain ATCC BAA-1101 / DSM 17681 / MLHE-1).